Reading from the N-terminus, the 97-residue chain is uncharacterized protein (97 aa).

This is an uncharacterized protein from Haemophilus influenzae (strain ATCC 51907 / DSM 11121 / KW20 / Rd).